Consider the following 254-residue polypeptide: Arginine transport ATP-binding protein ArgV (254 aa).

The ABC transporter domain occupies 6 to 250 (IDAQQVCKNY…PKEQRTKDFL (245 aa)). 38–45 (GPSGSGKS) provides a ligand contact to ATP.

The protein belongs to the ABC transporter superfamily. In terms of assembly, the complex is probably composed of two ATP-binding proteins (ArgV), two transmembrane proteins (ArgU) and a solute-binding protein (ArgT).

It localises to the cell membrane. The catalysed reaction is a polar amino acid(out) + ATP + H2O = a polar amino acid(in) + ADP + phosphate + H(+). The enzyme catalyses L-arginine(out) + ATP + H2O = L-arginine(in) + ADP + phosphate + H(+). Functionally, part of the ABC transporter complex ArgTUV involved in L-arginine import. May also transport L-citrulline. Probably responsible for energy coupling to the transport system. This Corynebacterium glutamicum (strain ATCC 13032 / DSM 20300 / JCM 1318 / BCRC 11384 / CCUG 27702 / LMG 3730 / NBRC 12168 / NCIMB 10025 / NRRL B-2784 / 534) protein is Arginine transport ATP-binding protein ArgV.